Reading from the N-terminus, the 459-residue chain is Vicilin (459 aa).

Positions 1 to 28 (MAATTMKASFPLLMLMGISFLASVCVSS) are cleaved as a signal peptide. The region spanning 36–194 (FIFKSNKFQT…SFNTDYEEIE (159 aa)) is the Cupin type-1 1 domain. Disordered stretches follow at residues 235–258 (LSKNAKSTSKKSVSSESEPFNLRS), 321–346 (ELVGQRNENQQEQRKEDDEEEEQGEE), and 430–459 (ENQKQSHFADAQPQQRERGSRETRDRLSSV). The segment covering 238–251 (NAKSTSKKSVSSES) has biased composition (low complexity). Positions 254–426 (FNLRSRGPIY…AFPGSAQEVD (173 aa)) constitute a Cupin type-1 2 domain. Residues 337 to 346 (DDEEEEQGEE) are compositionally biased toward acidic residues. The span at 444–459 (QRERGSRETRDRLSSV) shows a compositional bias: basic and acidic residues.

It belongs to the 7S seed storage protein family.

It localises to the vacuole. The protein resides in the aleurone grain. Seed storage protein. This Pisum sativum (Garden pea) protein is Vicilin.